Here is a 226-residue protein sequence, read N- to C-terminus: Peroxiredoxin-like 2C (226 aa).

Residues 1-24 (MAAPVTRQVSGCAGRVPSPAGSVT) form a disordered region.

This sequence belongs to the peroxiredoxin-like PRXL2 family. PRXL2C subfamily.

May positively regulate ERK1/2 signaling and AKT1 activation leading to HIF1A up-regulation with an increased expression of glycolysis genes and enhanced glycolysis. This Mus musculus (Mouse) protein is Peroxiredoxin-like 2C (Prxl2c).